Here is a 218-residue protein sequence, read N- to C-terminus: 3-phospho-D-glycerate guanylyltransferase (218 aa).

Belongs to the CofC family.

The catalysed reaction is (2R)-3-phosphoglycerate + GTP + H(+) = 3-[(R)-glyceryl]-diphospho-5'-guanosine + diphosphate. It participates in cofactor biosynthesis; coenzyme F420 biosynthesis. Its function is as follows. Guanylyltransferase that catalyzes the activation of (2R)-3-phosphoglycerate (3PG) as 3-[(R)-glyceryl]-diphospho-5'-guanosine, via the condensation of 3PG with GTP. It is involved in the biosynthesis of a derivative of the hydride carrier cofactor coenzyme F420, 3PG-F420. The polypeptide is 3-phospho-D-glycerate guanylyltransferase (Phenylobacterium zucineum (strain HLK1)).